The following is a 501-amino-acid chain: Aspartyl/glutamyl-tRNA(Asn/Gln) amidotransferase subunit B (501 aa).

Positions 272-291 (QETRHYQETDGTTSKGRPKE) are disordered.

It belongs to the GatB/GatE family. GatB subfamily. As to quaternary structure, heterotrimer of A, B and C subunits.

The catalysed reaction is L-glutamyl-tRNA(Gln) + L-glutamine + ATP + H2O = L-glutaminyl-tRNA(Gln) + L-glutamate + ADP + phosphate + H(+). It carries out the reaction L-aspartyl-tRNA(Asn) + L-glutamine + ATP + H2O = L-asparaginyl-tRNA(Asn) + L-glutamate + ADP + phosphate + 2 H(+). Its function is as follows. Allows the formation of correctly charged Asn-tRNA(Asn) or Gln-tRNA(Gln) through the transamidation of misacylated Asp-tRNA(Asn) or Glu-tRNA(Gln) in organisms which lack either or both of asparaginyl-tRNA or glutaminyl-tRNA synthetases. The reaction takes place in the presence of glutamine and ATP through an activated phospho-Asp-tRNA(Asn) or phospho-Glu-tRNA(Gln). The polypeptide is Aspartyl/glutamyl-tRNA(Asn/Gln) amidotransferase subunit B (Corynebacterium efficiens (strain DSM 44549 / YS-314 / AJ 12310 / JCM 11189 / NBRC 100395)).